Consider the following 521-residue polypeptide: 7-deoxyloganic acid hydroxylase (521 aa).

Residues 8–28 traverse the membrane as a helical segment; sequence IIFLVFVSLTLYWVYRILDWV. N-linked (GlcNAc...) asparagine glycans are attached at residues N107 and N311. Heme is bound at residue C469.

The protein belongs to the cytochrome P450 family. As to expression, mostly present in actively growing aerial organs, including leaves, flower buds and stems, and, to a lower extent, in mature leaves, roots and opened flowers. Expressed in the leaf internal phloem-associated parenchyma (IPAP) inside the mesophyll.

Its subcellular location is the endoplasmic reticulum membrane. It carries out the reaction 7-deoxyloganate + reduced [NADPH--hemoprotein reductase] + O2 = loganate + oxidized [NADPH--hemoprotein reductase] + H2O + H(+). Its pathway is alkaloid biosynthesis. Its function is as follows. Component of the seco-iridoid and derivatives monoterpenoid indole alkaloids (MIAs, e.g. vincristine, quinine, and strychnine) biosynthesis pathway. Catalyzes the conversion of 7-deoxyloganic acid into loganic acid. Not active on 7-deoxyloganetic acid. The polypeptide is 7-deoxyloganic acid hydroxylase (Catharanthus roseus (Madagascar periwinkle)).